A 588-amino-acid chain; its full sequence is Aspartate--tRNA ligase (588 aa).

Residue Glu-177 participates in L-aspartate binding. An aspartate region spans residues 201 to 204; sequence QLFK. Arg-223 is a binding site for L-aspartate. ATP-binding positions include 223–225 and Gln-232; that span reads RDE. His-451 contributes to the L-aspartate binding site. Glu-485 is a binding site for ATP. Arg-492 provides a ligand contact to L-aspartate. Position 537-540 (537-540) interacts with ATP; sequence GLDR.

This sequence belongs to the class-II aminoacyl-tRNA synthetase family. Type 1 subfamily. Homodimer.

It localises to the cytoplasm. The enzyme catalyses tRNA(Asp) + L-aspartate + ATP = L-aspartyl-tRNA(Asp) + AMP + diphosphate. Catalyzes the attachment of L-aspartate to tRNA(Asp) in a two-step reaction: L-aspartate is first activated by ATP to form Asp-AMP and then transferred to the acceptor end of tRNA(Asp). The polypeptide is Aspartate--tRNA ligase (Staphylococcus epidermidis (strain ATCC 35984 / DSM 28319 / BCRC 17069 / CCUG 31568 / BM 3577 / RP62A)).